A 742-amino-acid chain; its full sequence is Envelope glycoprotein H (742 aa).

Residues 1 to 29 form the signal peptide; the sequence is MRPGLPSYLIVLAVCLLSHLLSSRYGAEA. At 30 to 719 the chain is on the virion surface side; sequence ISEPLDKAFH…VVDATDSRLL (690 aa). Residues Asn-55, Asn-62, Asn-67, and Asn-192 are each glycosylated (N-linked (GlcNAc...) asparagine; by host). The segment at 217–280 is interaction with gL; the sequence is YLIDELRYVK…QTEKHELLVL (64 aa). Asn-641 and Asn-700 each carry an N-linked (GlcNAc...) asparagine; by host glycan. Residues 720–740 traverse the membrane as a helical segment; sequence MMSVYALSAIIGIYLLYRMLK. Residues 741–742 are Intravirion-facing; the sequence is TC.

This sequence belongs to the herpesviridae glycoprotein H family. In terms of assembly, interacts with glycoprotein L (gL); this interaction is necessary for the correct processing and cell surface expression of gH. The heterodimer gH/gL seems to interact with gB trimers during fusion. Forms the envelope pentamer complex (PC) composed of gH, gL, UL128, UL130, and UL131A. The pentamer interacts with host NRP2. Forms the envelope trimer complex composed of gH, gL, and gO. The trimer interacts with host PDGFRA. The trimer also interacts with host EPHA2. In terms of processing, N-glycosylated, O-glycosylated, and sialylated.

The protein resides in the virion membrane. It localises to the host cell membrane. The protein localises to the host endosome membrane. Functionally, the heterodimer glycoprotein H-glycoprotein L is required for the fusion of viral and plasma membranes leading to virus entry into the host cell. Following initial binding to host receptor, membrane fusion is mediated by the fusion machinery composed of gB and the heterodimer gH/gL. May also be involved in the fusion between the virion envelope and the outer nuclear membrane during virion morphogenesis. In human cytomegalovirus, forms two distincts complexes to mediate viral entry, a trimer and a pentamer at the surface of the virion envelope. The gH-gL-gO trimer is required for infection in fibroblasts by interacting with host PDGFRA, and in glioblastoma cells by interacting with host EPHA2. The gH-gL-UL128-UL130-UL131A pentamer is essential for viral entry in epithelial, endothelial and myeloid cells via interaction with host NRP2. This is Envelope glycoprotein H from Human cytomegalovirus (strain Towne) (HHV-5).